We begin with the raw amino-acid sequence, 499 residues long: Alpha-internexin (499 aa).

Residues 1–87 (MSFGSEHYLC…SQAAARTNEY (87 aa)) form a head region. Ser-72 carries the post-translational modification Phosphoserine. The interval 88–129 (KIIRTNEKEQLQGLNDRFAVFIEKVHQLETQNRALEAELAAL) is coil 1A. The region spanning 94-407 (EKEQLQGLND…KLLEGEETRF (314 aa)) is the IF rod domain. Residues 130–142 (RQRHAEPSRVGEL) form a linker 1 region. The interval 143–238 (FQRELRDLRA…QVHDEEVAEL (96 aa)) is coil 1B. Residue Ser-219 is modified to Phosphoserine. The segment at 239-262 (LATLQASSQAAAEVDVTVAKPDLT) is linker 2. Positions 263–408 (SALREIRAQY…LLEGEETRFS (146 aa)) are coil 2. Residue Lys-290 is modified to N6-acetyllysine. Phosphoserine is present on Ser-335. Residues 409-499 (TSGLSISGLN…EETTISSQKI (91 aa)) form a tail region. Positions 441 to 466 (STGLSLKKEEEEEEASKVASKKTSQI) are disordered. A phosphoserine mark is found at Ser-469 and Ser-496.

Belongs to the intermediate filament family. Forms homodimers (in vitro). Forms heterodimers with NEFL, NEFM or NEFH (in vitro). O-glycosylated. Found predominantly in adult CNS.

Its function is as follows. Class-IV neuronal intermediate filament that is able to self-assemble. It is involved in the morphogenesis of neurons. It may form an independent structural network without the involvement of other neurofilaments or it may cooperate with NEFL to form the filamentous backbone to which NEFM and NEFH attach to form the cross-bridges. May also cooperate with the neuronal intermediate filament protein PRPH to form filamentous networks. This chain is Alpha-internexin (INA), found in Homo sapiens (Human).